The chain runs to 129 residues: Large ribosomal subunit protein uL22 (129 aa).

It belongs to the universal ribosomal protein uL22 family. In terms of assembly, part of the 50S ribosomal subunit.

This protein binds specifically to 23S rRNA; its binding is stimulated by other ribosomal proteins, e.g. L4, L17, and L20. It is important during the early stages of 50S assembly. It makes multiple contacts with different domains of the 23S rRNA in the assembled 50S subunit and ribosome. Its function is as follows. The globular domain of the protein is located near the polypeptide exit tunnel on the outside of the subunit, while an extended beta-hairpin is found that lines the wall of the exit tunnel in the center of the 70S ribosome. This is Large ribosomal subunit protein uL22 from Prochlorococcus marinus (strain MIT 9211).